Here is a 168-residue protein sequence, read N- to C-terminus: ATP synthase subunit b, sodium ion specific (168 aa).

A helical membrane pass occupies residues Val-9–Phe-29.

This sequence belongs to the ATPase B chain family. F-type ATPases have 2 components, F(1) - the catalytic core - and F(0) - the membrane proton channel. F(1) has five subunits: alpha(3), beta(3), gamma(1), delta(1), epsilon(1). F(0) has three main subunits: a(1), b(2) and c(10-14). The alpha and beta chains form an alternating ring which encloses part of the gamma chain. F(1) is attached to F(0) by a central stalk formed by the gamma and epsilon chains, while a peripheral stalk is formed by the delta and b chains.

The protein localises to the cell inner membrane. In terms of biological role, f(1)F(0) ATP synthase produces ATP from ADP in the presence of a proton or sodium gradient. F-type ATPases consist of two structural domains, F(1) containing the extramembraneous catalytic core and F(0) containing the membrane proton channel, linked together by a central stalk and a peripheral stalk. During catalysis, ATP synthesis in the catalytic domain of F(1) is coupled via a rotary mechanism of the central stalk subunits to proton translocation. Functionally, component of the F(0) channel, it forms part of the peripheral stalk, linking F(1) to F(0). The protein is ATP synthase subunit b, sodium ion specific (atpF) of Propionigenium modestum.